We begin with the raw amino-acid sequence, 322 residues long: Adenine deaminase (322 aa).

Residues histidine 11, histidine 13, and histidine 189 each coordinate Zn(2+). Glutamate 192 (proton donor) is an active-site residue. Zn(2+) is bound at residue aspartate 270. Aspartate 271 serves as a coordination point for substrate.

The protein belongs to the metallo-dependent hydrolases superfamily. Adenosine and AMP deaminases family. Adenine deaminase type 2 subfamily. The cofactor is Zn(2+).

The enzyme catalyses adenine + H2O + H(+) = hypoxanthine + NH4(+). Its function is as follows. Catalyzes the hydrolytic deamination of adenine to hypoxanthine. Plays an important role in the purine salvage pathway and in nitrogen catabolism. The sequence is that of Adenine deaminase from Rhizobium johnstonii (strain DSM 114642 / LMG 32736 / 3841) (Rhizobium leguminosarum bv. viciae).